Consider the following 147-residue polypeptide: uncharacterized protein (147 aa).

Residues 50-140 (NQKKAIIVDT…WNSENLPTTF (91 aa)) form the Rhodanese domain.

This is an uncharacterized protein from Buchnera aphidicola subsp. Schizaphis graminum (strain Sg).